We begin with the raw amino-acid sequence, 165 residues long: Fibrinogen-binding protein (165 aa).

The first 29 residues, Met-1–Ala-29, serve as a signal peptide directing secretion.

In terms of assembly, interacts with host fibrinogen alpha chain/FGA. Interacts with host complement protein C3.

The protein resides in the secreted. Its function is as follows. Extracellular fibrinogen-binding protein that plays an important role in virulence. By interacting with the alpha chain of fibrinogen and its derivative fibrin, enhances a non-functional interaction between fibrinogen and platelets and is responsible for repression of fibrinogen-dependent platelet aggregation. In addition, assembles a fibrinogen protective shield around the bacteria which results in impaired phagocytic clearance by the host. Mechanistically, interacts with host complement C3b deposited on the surface of the bacterium via its C-terminal and then recruits fibrinogen via its N-terminal. The protein is Fibrinogen-binding protein (fib) of Staphylococcus aureus.